The chain runs to 1582 residues: Hybrid PKS-NRPS synthetase TAS1 (1582 aa).

Residues 33–387 (IPLSKVQEVL…GEDTAAASRV (355 aa)) are condensation (C) domain. An adenylation (A) domain region spans residues 499-892 (RSRAATQPDE…KLHILGRMNN (394 aa)). The Carrier domain maps to 1015 to 1092 (NLVDRLEASI…RQAQRLSELV (78 aa)). In terms of domain architecture, Ketosynthase family 3 (KS3) spans 1127 to 1574 (APLFAIVGMA…GVNAHCILAS (448 aa)). Catalysis depends on for beta-ketoacyl synthase activity residues C1294 and H1432. The segment at 1460 to 1485 (ESRCSSGAISPTGTEQQPSDTKQTPR) is disordered. The segment covering 1462-1485 (RCSSGAISPTGTEQQPSDTKQTPR) has biased composition (polar residues). The active-site For beta-ketoacyl synthase activity is N1498.

This sequence in the N-terminal section; belongs to the NRP synthetase family. Requires pantetheine 4'-phosphate as cofactor.

The catalysed reaction is acetoacetyl-CoA + L-isoleucine + ATP = tenuazonic acid + AMP + diphosphate + CoA + 2 H(+). In terms of biological role, hybrid PKS-NRPS synthetase that mediates the biosynthesis of the toxin tenuazonic acid (TeA), an inhibitor of protein biosynthesis on ribosomes by suppressing the release of new protein. TAS1 alone is sufficient for TeA synthesis via the condensation of isoleucine (Ile) with acetoacetyl-CoA by the N-terminal NRPS module and subsequent cyclization conducted by the C-terminal KS domain. The chain is Hybrid PKS-NRPS synthetase TAS1 from Cordyceps militaris (strain CM01) (Caterpillar fungus).